Reading from the N-terminus, the 379-residue chain is Carbamoyl phosphate synthase small chain (379 aa).

The tract at residues Met-1–Glu-189 is CPSase. Positions 47, 241, and 243 each coordinate L-glutamine. The region spanning His-193–Ala-379 is the Glutamine amidotransferase type-1 domain. Cys-269 acts as the Nucleophile in catalysis. L-glutamine is bound by residues Leu-270, Gln-273, Asn-311, Gly-313, and Phe-314. Residues His-353 and Glu-355 contribute to the active site.

This sequence belongs to the CarA family. Composed of two chains; the small (or glutamine) chain promotes the hydrolysis of glutamine to ammonia, which is used by the large (or ammonia) chain to synthesize carbamoyl phosphate. Tetramer of heterodimers (alpha,beta)4.

The enzyme catalyses hydrogencarbonate + L-glutamine + 2 ATP + H2O = carbamoyl phosphate + L-glutamate + 2 ADP + phosphate + 2 H(+). It carries out the reaction L-glutamine + H2O = L-glutamate + NH4(+). It functions in the pathway amino-acid biosynthesis; L-arginine biosynthesis; carbamoyl phosphate from bicarbonate: step 1/1. It participates in pyrimidine metabolism; UMP biosynthesis via de novo pathway; (S)-dihydroorotate from bicarbonate: step 1/3. Small subunit of the glutamine-dependent carbamoyl phosphate synthetase (CPSase). CPSase catalyzes the formation of carbamoyl phosphate from the ammonia moiety of glutamine, carbonate, and phosphate donated by ATP, constituting the first step of 2 biosynthetic pathways, one leading to arginine and/or urea and the other to pyrimidine nucleotides. The small subunit (glutamine amidotransferase) binds and cleaves glutamine to supply the large subunit with the substrate ammonia. The chain is Carbamoyl phosphate synthase small chain from Vibrio parahaemolyticus serotype O3:K6 (strain RIMD 2210633).